Here is a 407-residue protein sequence, read N- to C-terminus: MTPMKRSVQTQVSEPFMESWGEESLPELPAEQSLTEYSDLEEAPSAHTLYVGHLNPQFSVPVLACLLRDTLERLEMPVAREHIEVVRRPRKAYALVQVTVHRDTLASLPWRLQTALEEHLILKELAARGKDLLLSEAQGPFSHREEKEEEEEDSGLSPGPSPGSGVPLPTWPTHTLPDRPQAQQLQSCQGRPSGVCSDSAIVHQQIVGKDQLFQGAFLGSETRNMEFKRGSGEYLSLAFKHHVRRYVCAFLNSEGGSLLVGVEDSGLVQGIRCSHRDEDRARLLVDSILQGFKPQIFPDAYTLTFIPVISTSETSVPLKVIRLTVHTPKAQSQPQLYQTDQGEVFLRRDGSIQGPLSASAIQEWCRQRWLVELGKLEEKMKALMMEKEQLQQQLQQHGPVSCTCCVL.

Disordered stretches follow at residues 1 to 28 (MTPM…LPEL) and 137 to 191 (AQGP…CQGR). Low complexity predominate over residues 155-167 (GLSPGPSPGSGVP). The span at 181–190 (QAQQLQSCQG) shows a compositional bias: polar residues. 261–268 (GVEDSGLV) lines the ATP pocket. The stretch at 366-398 (RQRWLVELGKLEEKMKALMMEKEQLQQQLQQHG) forms a coiled coil.

It belongs to the Schlafen family. Subgroup I subfamily.

This chain is Schlafen-like protein 1 (SLFNL1), found in Homo sapiens (Human).